The sequence spans 127 residues: Unclassified hydrophobin 5 (127 aa).

The first 24 residues, 1-24 (MFNKQTNAIVLLFTFALFATLAVA), serve as a signal peptide directing secretion. 4 disulfides stabilise this stretch: Cys39–Cys107, Cys46–Cys101, Cys47–Cys92, and Cys108–Cys121.

The protein belongs to the fungal hydrophobin family. As to quaternary structure, self-assembles to form functional amyloid fibrils called rodlets. Self-assembly into fibrillar rodlets occurs spontaneously at hydrophobic:hydrophilic interfaces and the rodlets further associate laterally to form amphipathic monolayers.

The protein resides in the secreted. Its subcellular location is the cell wall. In terms of biological role, aerial growth, conidiation, and dispersal of filamentous fungi in the environment rely upon a capability of their secreting small amphipathic proteins called hydrophobins (HPBs) with low sequence identity. Class I can self-assemble into an outermost layer of rodlet bundles on aerial cell surfaces, conferring cellular hydrophobicity that supports fungal growth, development and dispersal; whereas Class II form highly ordered films at water-air interfaces through intermolecular interactions but contribute nothing to the rodlet structure. In Pleurotus ostreatus (strain PC15) (Oyster mushroom), this protein is Unclassified hydrophobin 5.